Reading from the N-terminus, the 405-residue chain is Cytoplasmic tRNA 2-thiolation protein 2 (405 aa).

It belongs to the CTU2/NCS2 family.

The protein resides in the cytoplasm. It participates in tRNA modification; 5-methoxycarbonylmethyl-2-thiouridine-tRNA biosynthesis. In terms of biological role, plays a central role in 2-thiolation of mcm(5)S(2)U at tRNA wobble positions of tRNA(Lys), tRNA(Glu) and tRNA(Gln). May act by forming a heterodimer with NCS6/CTU1 that ligates sulfur from thiocarboxylated URM1 onto the uridine of tRNAs at wobble position. The protein is Cytoplasmic tRNA 2-thiolation protein 2 of Drosophila pseudoobscura pseudoobscura (Fruit fly).